The following is a 931-amino-acid chain: Protein translocase subunit SecA (931 aa).

ATP-binding positions include glutamine 87, 105 to 109, and aspartate 515; that span reads GEGKT. 4 residues coordinate Zn(2+): cysteine 915, cysteine 917, cysteine 926, and histidine 927.

The protein belongs to the SecA family. Monomer and homodimer. Part of the essential Sec protein translocation apparatus which comprises SecA, SecYEG and auxiliary proteins SecDF-YajC and YidC. Zn(2+) serves as cofactor.

The protein localises to the cell inner membrane. Its subcellular location is the cytoplasm. It catalyses the reaction ATP + H2O + cellular proteinSide 1 = ADP + phosphate + cellular proteinSide 2.. Functionally, part of the Sec protein translocase complex. Interacts with the SecYEG preprotein conducting channel. Has a central role in coupling the hydrolysis of ATP to the transfer of proteins into and across the cell membrane, serving both as a receptor for the preprotein-SecB complex and as an ATP-driven molecular motor driving the stepwise translocation of polypeptide chains across the membrane. The chain is Protein translocase subunit SecA from Burkholderia ambifaria (strain MC40-6).